Here is a 452-residue protein sequence, read N- to C-terminus: LIM/homeobox protein lim-7 (452 aa).

LIM zinc-binding domains follow at residues alanine 54–threonine 116 and arginine 117–proline 179. Residues serine 184–valine 268 are disordered. Composition is skewed to low complexity over residues asparagine 192–asparagine 205 and threonine 217–serine 227. Residues alanine 265–glutamine 324 constitute a DNA-binding region (homeobox). The segment at glycine 347–tryptophan 376 is LIM interaction domain (LID).

Interacts (via LID domain) with ceh-14 (via LIM zinc-binding domains 1 and 2). In terms of tissue distribution, expressed in gonadal sheath cells, URA motoneurons, and 10 additional cells near the isthmus and terminal bulb of the pharynx. Expressed in the ALA and BDU cells.

It is found in the nucleus. Its function is as follows. Probable DNA-binding transcriptional activator. The protein is LIM/homeobox protein lim-7 of Caenorhabditis elegans.